A 361-amino-acid polypeptide reads, in one-letter code: Peptide chain release factor 1 (361 aa).

Position 237 is an N5-methylglutamine (glutamine 237). The span at 287-297 shows a compositional bias: basic and acidic residues; sequence KQQKEQSDTRK. The tract at residues 287 to 313 is disordered; the sequence is KQQKEQSDTRKSLVGSGDRSERIRTYN.

Belongs to the prokaryotic/mitochondrial release factor family. Post-translationally, methylated by PrmC. Methylation increases the termination efficiency of RF1.

The protein localises to the cytoplasm. Functionally, peptide chain release factor 1 directs the termination of translation in response to the peptide chain termination codons UAG and UAA. This Francisella tularensis subsp. tularensis (strain FSC 198) protein is Peptide chain release factor 1.